The primary structure comprises 499 residues: Bifunctional purine biosynthesis protein PurH (499 aa).

One can recognise an MGS-like domain in the interval methionine 1–threonine 144.

The protein belongs to the PurH family.

The catalysed reaction is (6R)-10-formyltetrahydrofolate + 5-amino-1-(5-phospho-beta-D-ribosyl)imidazole-4-carboxamide = 5-formamido-1-(5-phospho-D-ribosyl)imidazole-4-carboxamide + (6S)-5,6,7,8-tetrahydrofolate. It carries out the reaction IMP + H2O = 5-formamido-1-(5-phospho-D-ribosyl)imidazole-4-carboxamide. It participates in purine metabolism; IMP biosynthesis via de novo pathway; 5-formamido-1-(5-phospho-D-ribosyl)imidazole-4-carboxamide from 5-amino-1-(5-phospho-D-ribosyl)imidazole-4-carboxamide (10-formyl THF route): step 1/1. It functions in the pathway purine metabolism; IMP biosynthesis via de novo pathway; IMP from 5-formamido-1-(5-phospho-D-ribosyl)imidazole-4-carboxamide: step 1/1. This is Bifunctional purine biosynthesis protein PurH from Clostridium botulinum (strain Langeland / NCTC 10281 / Type F).